The sequence spans 248 residues: Probable transcriptional regulatory protein Avi_3631 (248 aa).

It belongs to the TACO1 family.

It is found in the cytoplasm. This is Probable transcriptional regulatory protein Avi_3631 from Allorhizobium ampelinum (strain ATCC BAA-846 / DSM 112012 / S4) (Agrobacterium vitis (strain S4)).